A 458-amino-acid polypeptide reads, in one-letter code: Vasoactive intestinal polypeptide receptor 1 (458 aa).

The first 31 residues, 1 to 31 (MRPLSPPPAGWFCVLAGVLACVLGPVGSWAV), serve as a signal peptide directing secretion. Topologically, residues 32 to 142 (GLQQEECDYL…DEQQTVFYNS (111 aa)) are extracellular. 5 disulfides stabilise this stretch: Cys38–Cys209, Cys51–Cys73, Cys64–Cys106, Cys87–Cys123, and Cys216–Cys286. 4 N-linked (GlcNAc...) asparagine glycosylation sites follow: Asn59, Asn70, Asn101, and Asn105. The chain crosses the membrane as a helical span at residues 143 to 167 (VKTGYTIGYSLSLAALLVATAILSL). Residues 168-175 (FRKLHCTR) lie on the Cytoplasmic side of the membrane. Residues 176–197 (NYIHMHLFISFILRATAVFIKD) form a helical membrane-spanning segment. Topologically, residues 198–217 (LALFDSEESDHCSKGSVGCK) are extracellular. Residues 218-242 (AAVVLFQYCVMANFFWLLVEGLYLH) form a helical membrane-spanning segment. Topologically, residues 243 to 255 (TLLAVSFFSERKY) are cytoplasmic. A helical membrane pass occupies residues 256–277 (FWGYIFVGWGVPSTFIMVWTVV). Residues 278-292 (RIHFEDYGCWDTIHS) lie on the Extracellular side of the membrane. The chain crosses the membrane as a helical span at residues 293–317 (SLWWIIKAPILASILVNFILFIRII). At 318 to 339 (GILVQKLRPPDVGKSDNSPYSR) the chain is on the cytoplasmic side. Residues 340-360 (LAKSTLLLIPLFGVHYIMFAF) form a helical membrane-spanning segment. Residues 361-368 (FPDNFKAE) lie on the Extracellular side of the membrane. The helical transmembrane segment at 369 to 392 (VKMVFELIVGSFQGCVVAILYCFL) threads the bilayer. Residues 393–458 (NGEVQAELRR…SSFQAEVSLV (66 aa)) lie on the Cytoplasmic side of the membrane.

It belongs to the G-protein coupled receptor 2 family. As to quaternary structure, interacts with ADCYAP1/PACAP; activated by both PACAP27 and PACAP38 neuropeptides. Interacts with VIP; the interaction results in VIPR1 activation.

The protein resides in the cell membrane. G protein-coupled receptor activated by the neuropeptides vasoactive intestinal peptide (VIP) and pituitary adenylate cyclase-activating polypeptide (ADCYAP1/PACAP). Binds VIP and both PACAP27 and PACAP38 bioactive peptides with the following order of ligand affinity VIP = PACAP27 &gt; PACAP38. Ligand binding causes a conformation change that triggers signaling via guanine nucleotide-binding proteins (G proteins) and modulates the activity of downstream effectors. Activates cAMP-dependent pathway. The protein is Vasoactive intestinal polypeptide receptor 1 (VIPR1) of Sus scrofa (Pig).